A 352-amino-acid chain; its full sequence is Inhibin beta C chain (352 aa).

The signal sequence occupies residues 1-18 (MASSLLLALLFLTPTTVV). Residues 19–236 (NPKTEGPCPA…VEGKHRVRRR (218 aa)) constitute a propeptide that is removed on maturation. N-linked (GlcNAc...) asparagine glycosylation is found at asparagine 111, asparagine 143, asparagine 161, and asparagine 173. Intrachain disulfides connect cysteine 240/cysteine 248, cysteine 247/cysteine 317, cysteine 276/cysteine 349, and cysteine 280/cysteine 351.

It belongs to the TGF-beta family. As to quaternary structure, homodimeric or heterodimeric through association with alpha and beta subunits, linked by one or more disulfide bonds. Inhibins are heterodimers of one alpha and one beta subunit. Activins are homo- or heterodimers of beta subunits only. Mainly expressed in the adult liver.

The protein resides in the secreted. Inhibins and activins inhibit and activate, respectively, the secretion of follitropin by the pituitary gland. Inhibins/activins are involved in regulating a number of diverse functions such as hypothalamic and pituitary hormone secretion, gonadal hormone secretion, germ cell development and maturation, erythroid differentiation, insulin secretion, nerve cell survival, embryonic axial development or bone growth, depending on their subunit composition. Inhibins appear to oppose the functions of activins. This chain is Inhibin beta C chain (Inhbc), found in Mus musculus (Mouse).